A 190-amino-acid polypeptide reads, in one-letter code: Lipid A acyltransferase PagP (190 aa).

An N-terminal signal peptide occupies residues 1–18 (MKRLISCLTIICALNASA). Active-site residues include His-60, Asp-103, and Ser-104.

It belongs to the lipid A palmitoyltransferase family. Homodimer.

It localises to the cell outer membrane. The enzyme catalyses a lipid A + a 1,2-diacyl-sn-glycero-3-phosphocholine = a hepta-acyl lipid A + a 2-acyl-sn-glycero-3-phosphocholine. The catalysed reaction is a lipid IVA + a 1,2-diacyl-sn-glycero-3-phosphocholine = a lipid IVB + a 2-acyl-sn-glycero-3-phosphocholine. It catalyses the reaction a lipid IIA + a 1,2-diacyl-sn-glycero-3-phosphocholine = a lipid IIB + a 2-acyl-sn-glycero-3-phosphocholine. In terms of biological role, transfers a fatty acid residue from the sn-1 position of a phospholipid to the N-linked hydroxyfatty acid chain on the proximal unit of lipid A or its precursors. This is Lipid A acyltransferase PagP from Legionella pneumophila serogroup 1 (strain 2300/99 Alcoy).